The following is a 265-amino-acid chain: Arcelin-2 (265 aa).

The N-terminal stretch at 1–21 (MASSNLLTLALFLVLLTHANS) is a signal peptide. N-linked (GlcNAc...) asparagine glycosylation is found at Asn33 and Asn89. Cys165 and Cys201 are oxidised to a cystine.

Belongs to the leguminous lectin family.

Seed storage. This carbohydrate-binding lectin has toxic effects on bean bruchid pests. Antibiosis properties of legume lectins are proposed to be due to the lysis of epithelial cells of the intestine by binding to the carbohydrate moieties of these proteins. The polypeptide is Arcelin-2 (ARC2) (Phaseolus vulgaris (Kidney bean)).